A 578-amino-acid polypeptide reads, in one-letter code: Acyl-CoA synthetase ACTT5 (578 aa).

211 to 222 (RLTTSGTTGLPK) serves as a coordination point for AMP. An AMP-binding region spans residues 472-551 (ELEAALLQAK…DEIPRSPTGK (80 aa)).

Belongs to the ATP-dependent AMP-binding enzyme family.

It participates in mycotoxin biosynthesis. In terms of biological role, acyl-CoA synthetase; part of the gene clusters that mediate the biosynthesis of the host-selective toxins (HSTs) ACT-toxins responsible for brown spot of tangerine disease by the tangerine pathotype which affects tangerines and mandarins. ACT-toxins consist of three moieties, 9,10-epoxy-8-hydroxy-9-methyl-decatrienoic acid (EDA), valine and a polyketide. ACT-toxin I is toxic to both citrus and pear; toxin II the 5''-deoxy derivative of ACT-toxin I, is highly toxic to pear and slightly toxic to citrus. On cellular level, ACT-toxins affect plasma membrane of susceptible cells and cause a sudden increase in loss of K(+) after a few minutes of toxin treatment. The acyl-CoA ligase ACTT1, the hydrolase ACTT2, the enoyl-CoA hydratases ACTT3 and ACTT6, and the acyl-CoA synthetase ACTT5 are all involved in the biosynthesis of the AK-, AF- and ACT-toxin common 9,10-epoxy-8-hydroxy-9-methyl-decatrienoic acid (EDA) structural moiety. The exact role of each enzyme, and of additional enzymes identified within the AF-toxin clusters have still to be determined. On the other hand, ACTTS1 to ACTTS4 are specific to the tangerine pathotype. The function of ACTTS3 is to elongate the polyketide chain portion of ACT-toxin that is unique to this toxin. The enoyl-reductase ACTTS2 might complement the missing enoyl-reductase (ER) domain in ACTTS3 in the synthesis of the polyketide portion of ACT-toxin. The roles of the nonribosomal peptide synthetases-related proteins ACTTS1 and ACTTS4 have also still not been elucidated. The polypeptide is Acyl-CoA synthetase ACTT5 (Alternaria alternata (Alternaria rot fungus)).